The following is a 453-amino-acid chain: MVASSFAVLRASRLCQWGWKSWTQLSGPPPLSTGGRTTFARTNATLSLEPGSRSCWDEPLSITVRGLAPEQPVTLRAALRDEKGALFRAHARYRADAGGELDLARAPALGGSFTGLEPMGLIWAMEPERPLWRLVKRDVQKPYVVELEVLDGHEPDGGQRLAQAVHERHFMAPGVRRVPVRDGRVRATLFLPPEPGPFPEIIDLFGVGGGLLEYRASLLAGKGFAVMALAYYNYDDLPKTMETMRIEYFEEAVNYLRGHPEVKGPGIGLLGISKGGELGLAMASFLKGITAAVVINGSVAAVGNTVCYKDETIPPVSLLRDKVKMTKDGLLDVVEALQSPLVDKKSFIPVERSDTTFLFLVGQDDHNWKSEFYAREASKRLQAHGKEKPQIICYPEAGHYIEPPYFPLCSAGMHLLVGANITFGGEPKPHSVAQLDAWQQLQTFFHKQLSGKS.

A mitochondrion-targeting transit peptide spans 1 to 42 (MVASSFAVLRASRLCQWGWKSWTQLSGPPPLSTGGRTTFART). Lysine 83 carries the post-translational modification N6-acetyllysine. Active-site charge relay system residues include serine 273, aspartate 365, and histidine 399. Residue lysine 447 is modified to N6-succinyllysine.

The protein belongs to the C/M/P thioester hydrolase family. As to quaternary structure, monomer. Post-translationally, the N-terminus is blocked. Constitutively expressed in heart and brown fat. Strongly induced in liver, and weakly in kidney, in peroxisome proliferator treated rat.

The protein localises to the mitochondrion matrix. The enzyme catalyses hexadecanoyl-CoA + H2O = hexadecanoate + CoA + H(+). The catalysed reaction is tetradecanoyl-CoA + H2O = tetradecanoate + CoA + H(+). It catalyses the reaction octadecanoyl-CoA + H2O = octadecanoate + CoA + H(+). It carries out the reaction eicosanoyl-CoA + H2O = eicosanoate + CoA + H(+). The enzyme catalyses decanoyl-CoA + H2O = decanoate + CoA + H(+). The catalysed reaction is dodecanoyl-CoA + H2O = dodecanoate + CoA + H(+). It catalyses the reaction (9Z)-octadecenoyl-CoA + H2O = (9Z)-octadecenoate + CoA + H(+). It carries out the reaction (9Z)-hexadecenoyl-CoA + H2O = (9Z)-hexadecenoate + CoA + H(+). The enzyme catalyses (9E)-octadecenoyl-CoA + H2O = (9E)-octadecenoate + CoA + H(+). The catalysed reaction is (9Z,12Z)-octadecadienoyl-CoA + H2O = (9Z,12Z)-octadecadienoate + CoA + H(+). It participates in lipid metabolism; fatty acid metabolism. Catalyzes the hydrolysis of acyl-CoAs into free fatty acids and coenzyme A (CoASH), regulating their respective intracellular levels. Displays higher activity toward long chain acyl CoAs (C14-C20). The enzyme is involved in enhancing the hepatic fatty acid oxidation in mitochondria. The polypeptide is Acyl-coenzyme A thioesterase 2, mitochondrial (Acot2) (Rattus norvegicus (Rat)).